The following is a 426-amino-acid chain: Phosphomethylpyrimidine synthase (426 aa).

Residues asparagine 65, methionine 94, tyrosine 123, histidine 162, 184 to 186 (SRG), 225 to 228 (DGMR), and glutamate 264 contribute to the substrate site. Histidine 268 lines the Zn(2+) pocket. Residue tyrosine 291 coordinates substrate. Histidine 332 contacts Zn(2+). [4Fe-4S] cluster contacts are provided by cysteine 408, cysteine 411, and cysteine 415.

Belongs to the ThiC family. The cofactor is [4Fe-4S] cluster.

The enzyme catalyses 5-amino-1-(5-phospho-beta-D-ribosyl)imidazole + S-adenosyl-L-methionine = 4-amino-2-methyl-5-(phosphooxymethyl)pyrimidine + CO + 5'-deoxyadenosine + formate + L-methionine + 3 H(+). Its pathway is cofactor biosynthesis; thiamine diphosphate biosynthesis. Catalyzes the synthesis of the hydroxymethylpyrimidine phosphate (HMP-P) moiety of thiamine from aminoimidazole ribotide (AIR) in a radical S-adenosyl-L-methionine (SAM)-dependent reaction. The protein is Phosphomethylpyrimidine synthase of Methanococcus aeolicus (strain ATCC BAA-1280 / DSM 17508 / OCM 812 / Nankai-3).